Consider the following 264-residue polypeptide: Putative [LysW]-aminoadipate/[LysW]-glutamate kinase (264 aa).

Substrate-binding positions include 34-35, arginine 61, and asparagine 169; that span reads GG.

It belongs to the acetylglutamate kinase family. LysZ subfamily.

Its subcellular location is the cytoplasm. The catalysed reaction is [amino-group carrier protein]-C-terminal-N-(1,4-dicarboxybutan-1-yl)-L-glutamine + ATP = [amino-group carrier protein]-C-terminal-N-(1-carboxy-5-phosphooxy-5-oxopentan-1-yl)-L-glutamine + ADP. It carries out the reaction [amino-group carrier protein]-C-terminal-gamma-(L-glutamyl)-L-glutamate + ATP = [amino-group carrier protein]-C-terminal-gamma-(5-phospho-L-glutamyl)-L-glutamate + ADP. The protein operates within amino-acid biosynthesis; L-lysine biosynthesis via AAA pathway; L-lysine from L-alpha-aminoadipate (Thermus route): step 2/5. It participates in amino-acid biosynthesis; L-arginine biosynthesis. In terms of biological role, involved in both the arginine and lysine biosynthetic pathways. Phosphorylates the LysW-bound precursors glutamate (for arginine biosynthesis), respectively alpha-aminoadipate (for lysine biosynthesis). The polypeptide is Putative [LysW]-aminoadipate/[LysW]-glutamate kinase (Ignicoccus hospitalis (strain KIN4/I / DSM 18386 / JCM 14125)).